The chain runs to 439 residues: Xylose isomerase (439 aa).

Active-site residues include H103 and D106. Residues E234, E270, H273, D298, D309, D311, and D341 each contribute to the Mg(2+) site.

It belongs to the xylose isomerase family. Homotetramer. Mg(2+) is required as a cofactor.

The protein resides in the cytoplasm. The enzyme catalyses alpha-D-xylose = alpha-D-xylulofuranose. The sequence is that of Xylose isomerase from Bacteroides fragilis (strain ATCC 25285 / DSM 2151 / CCUG 4856 / JCM 11019 / LMG 10263 / NCTC 9343 / Onslow / VPI 2553 / EN-2).